We begin with the raw amino-acid sequence, 166 residues long: Olee1-like protein (166 aa).

Residues 1 to 23 form the signal peptide; the sequence is MAKSIIIQAPALCFLSLLGFAYS. Cystine bridges form between Cys35–Cys106, Cys38–Cys150, and Cys59–Cys94.

It belongs to the Ole e I family.

The protein resides in the secreted. The sequence is that of Olee1-like protein from Betula pendula (European white birch).